The chain runs to 315 residues: Ribosomal RNA small subunit methyltransferase H (315 aa).

S-adenosyl-L-methionine-binding positions include 61–63 (GGH), D80, F108, D124, and Q131. The disordered stretch occupies residues 291-315 (PQPEEEEKNPRSRSAKLRFAQRKPL). Positions 301 to 315 (RSRSAKLRFAQRKPL) are enriched in basic residues.

This sequence belongs to the methyltransferase superfamily. RsmH family.

Its subcellular location is the cytoplasm. It catalyses the reaction cytidine(1402) in 16S rRNA + S-adenosyl-L-methionine = N(4)-methylcytidine(1402) in 16S rRNA + S-adenosyl-L-homocysteine + H(+). In terms of biological role, specifically methylates the N4 position of cytidine in position 1402 (C1402) of 16S rRNA. This Crocosphaera subtropica (strain ATCC 51142 / BH68) (Cyanothece sp. (strain ATCC 51142)) protein is Ribosomal RNA small subunit methyltransferase H.